Reading from the N-terminus, the 83-residue chain is Cytochrome b559 subunit alpha (83 aa).

Residues 22-36 traverse the membrane as a helical segment; it reads VIHSITIPALFIAGW. Residue His-24 participates in heme binding.

The protein belongs to the PsbE/PsbF family. Heterodimer of an alpha subunit and a beta subunit. PSII is composed of 1 copy each of membrane proteins PsbA, PsbB, PsbC, PsbD, PsbE, PsbF, PsbH, PsbI, PsbJ, PsbK, PsbL, PsbM, PsbT, PsbX, PsbY, PsbZ, Psb30/Ycf12, peripheral proteins PsbO, CyanoQ (PsbQ), PsbU, PsbV and a large number of cofactors. It forms dimeric complexes. It depends on heme b as a cofactor.

It is found in the cellular thylakoid membrane. This b-type cytochrome is tightly associated with the reaction center of photosystem II (PSII). PSII is a light-driven water:plastoquinone oxidoreductase that uses light energy to abstract electrons from H(2)O, generating O(2) and a proton gradient subsequently used for ATP formation. It consists of a core antenna complex that captures photons, and an electron transfer chain that converts photonic excitation into a charge separation. The protein is Cytochrome b559 subunit alpha of Synechococcus elongatus (strain ATCC 33912 / PCC 7942 / FACHB-805) (Anacystis nidulans R2).